The sequence spans 142 residues: FAD synthase (142 aa).

ATP is bound by residues 9 to 10 (TF), 14 to 17 (HPGH), and aspartate 92.

This sequence belongs to the archaeal FAD synthase family. Homodimer. It depends on a divalent metal cation as a cofactor.

It catalyses the reaction FMN + ATP + H(+) = FAD + diphosphate. It functions in the pathway cofactor biosynthesis; FAD biosynthesis; FAD from FMN: step 1/1. Functionally, catalyzes the transfer of the AMP portion of ATP to flavin mononucleotide (FMN) to produce flavin adenine dinucleotide (FAD) coenzyme. This chain is FAD synthase, found in Methanohalophilus mahii (strain ATCC 35705 / DSM 5219 / SLP).